A 132-amino-acid chain; its full sequence is Protein NrdI (132 aa).

Belongs to the NrdI family.

In terms of biological role, probably involved in ribonucleotide reductase function. This is Protein NrdI from Bartonella henselae (strain ATCC 49882 / DSM 28221 / CCUG 30454 / Houston 1) (Rochalimaea henselae).